Reading from the N-terminus, the 462-residue chain is Trigger factor (462 aa).

The PPIase FKBP-type domain maps to 163–259; sequence TDYVNIDLQR…VNDVKRRDLP (97 aa). The tract at residues 439 to 462 is disordered; that stretch reads SREEFEEEMQQQQQQQAQRQRMAP. Residues 448–462 show a composition bias toward low complexity; the sequence is QQQQQQQAQRQRMAP.

This sequence belongs to the FKBP-type PPIase family. Tig subfamily.

It is found in the cytoplasm. The enzyme catalyses [protein]-peptidylproline (omega=180) = [protein]-peptidylproline (omega=0). In terms of biological role, involved in protein export. Acts as a chaperone by maintaining the newly synthesized protein in an open conformation. Functions as a peptidyl-prolyl cis-trans isomerase. In Salinibacter ruber (strain DSM 13855 / M31), this protein is Trigger factor.